A 501-amino-acid polypeptide reads, in one-letter code: MQETVTTSALLDPSHSSVSTQDKSSTGGHTSSTGPQPSKPSITPVSAKSRNPHPGANFHRMRRIIAEDPEWSLAIVPLLTELCIQHIIRNFQNNPILKQMLPEHQQKVLNHLSPDLPLAVTSNLIDNENYWLRCCMQRWPVCHVAHHGGSWKRMFFERHLENLLKHFIPGTTDPAVILDLLPLCRNYVRRVHVDQFLPPVQIPAQLRPGDQSDSGSEGEMEEPTVDHYQLGDLVAGLSHLEELDLVYDVKDCGMNFEWNLFLFTYRDCHSLAAAIKACHTLKIFKLTRSKVDDDKARIIIRSLLDHPVLEELDLSHNLIGDRGARGAAKLLNHSRLRVLNLANNQVRAPGAQSLAHALAHNTNLISLNLRLNCIEDEGGQALAHALQTNKCLTTLHLGGNELSEPTATLLSQVLAINTTLTSINLSCNHIGLDGGKQLLEGMSDNKTLLEFDLRLSDVAQESEYLIGQALYANREAARQRALNPSHFMSTITANGPENSVG.

The span at 1 to 23 (MQETVTTSALLDPSHSSVSTQDK) shows a compositional bias: polar residues. Disordered regions lie at residues 1–56 (MQET…HPGA) and 203–222 (PAQL…EMEE). Residues 24 to 34 (SSTGGHTSSTG) are compositionally biased toward low complexity. The segment covering 35–49 (PQPSKPSITPVSAKS) has biased composition (polar residues). LRR repeat units lie at residues 308-321 (VLEE…LIGD), 335-355 (RLRV…QSLA), 363-383 (NLIS…QALA), 391-411 (CLTT…TLLS), and 419-439 (TLTS…KQLL).

The protein belongs to the DRC5 family. As to quaternary structure, component of the nexin-dynein regulatory complex (N-DRC). Interacts with DRC1. Interacts with FBXL13/DRC6, DRC3 and DRC7.

It localises to the cell projection. The protein resides in the cilium. It is found in the flagellum. The protein localises to the cytoplasm. Its subcellular location is the cytoskeleton. It localises to the flagellum axoneme. Component of the nexin-dynein regulatory complex (N-DRC) a key regulator of ciliary/flagellar motility which maintains the alignment and integrity of the distal axoneme and regulates microtubule sliding in motile axonemes. May play a role in the assembly of N-DRC. May be required for sperm motility. The polypeptide is Dynein regulatory complex subunit 5 (TCTE1) (Macaca fascicularis (Crab-eating macaque)).